The following is a 157-amino-acid chain: Ribosome maturation factor RimP (157 aa).

This sequence belongs to the RimP family.

Its subcellular location is the cytoplasm. Its function is as follows. Required for maturation of 30S ribosomal subunits. The polypeptide is Ribosome maturation factor RimP (Petrotoga mobilis (strain DSM 10674 / SJ95)).